A 460-amino-acid polypeptide reads, in one-letter code: C4-dicarboxylate transport protein (460 aa).

8 consecutive transmembrane segments (helical) span residues 21–38, 53–75, 88–110, 153–175, 196–218, 231–253, 301–323, and 363–385; these read LYFQ…IGHF, FIKL…GIAG, YALL…VVNV, IVGA…FGFA, VMFN…AMAF, LGQL…LGSI, VVGL…YLTM, and FIVL…ALIL. The segment at 438–460 is disordered; sequence PEDDLGVAEGPTPANAVNTTKTV.

The protein belongs to the dicarboxylate/amino acid:cation symporter (DAACS) (TC 2.A.23) family.

The protein resides in the cell inner membrane. Functionally, responsible for the transport of dicarboxylates such as succinate, fumarate, and malate from the periplasm across the membrane. The chain is C4-dicarboxylate transport protein from Pseudomonas syringae pv. tomato (strain ATCC BAA-871 / DC3000).